A 332-amino-acid chain; its full sequence is Glycerol-3-phosphate dehydrogenase [NAD(P)+] (332 aa).

Positions 11, 30, and 108 each coordinate NADPH. The sn-glycerol 3-phosphate site is built by Lys-108, Gly-137, and Ser-139. Position 141 (Ala-141) interacts with NADPH. Residues Lys-192, Asp-245, Ser-255, Arg-256, and Asn-257 each contribute to the sn-glycerol 3-phosphate site. The active-site Proton acceptor is Lys-192. Position 256 (Arg-256) interacts with NADPH. Residues Val-280 and Glu-282 each coordinate NADPH.

Belongs to the NAD-dependent glycerol-3-phosphate dehydrogenase family.

It is found in the cytoplasm. The enzyme catalyses sn-glycerol 3-phosphate + NAD(+) = dihydroxyacetone phosphate + NADH + H(+). It carries out the reaction sn-glycerol 3-phosphate + NADP(+) = dihydroxyacetone phosphate + NADPH + H(+). It participates in membrane lipid metabolism; glycerophospholipid metabolism. Catalyzes the reduction of the glycolytic intermediate dihydroxyacetone phosphate (DHAP) to sn-glycerol 3-phosphate (G3P), the key precursor for phospholipid synthesis. This is Glycerol-3-phosphate dehydrogenase [NAD(P)+] from Burkholderia mallei (strain ATCC 23344).